The sequence spans 476 residues: Aspartyl/glutamyl-tRNA(Asn/Gln) amidotransferase subunit B (476 aa).

This sequence belongs to the GatB/GatE family. GatB subfamily. In terms of assembly, heterotrimer of A, B and C subunits.

The enzyme catalyses L-glutamyl-tRNA(Gln) + L-glutamine + ATP + H2O = L-glutaminyl-tRNA(Gln) + L-glutamate + ADP + phosphate + H(+). It catalyses the reaction L-aspartyl-tRNA(Asn) + L-glutamine + ATP + H2O = L-asparaginyl-tRNA(Asn) + L-glutamate + ADP + phosphate + 2 H(+). Functionally, allows the formation of correctly charged Asn-tRNA(Asn) or Gln-tRNA(Gln) through the transamidation of misacylated Asp-tRNA(Asn) or Glu-tRNA(Gln) in organisms which lack either or both of asparaginyl-tRNA or glutaminyl-tRNA synthetases. The reaction takes place in the presence of glutamine and ATP through an activated phospho-Asp-tRNA(Asn) or phospho-Glu-tRNA(Gln). The chain is Aspartyl/glutamyl-tRNA(Asn/Gln) amidotransferase subunit B from Albidiferax ferrireducens (strain ATCC BAA-621 / DSM 15236 / T118) (Rhodoferax ferrireducens).